We begin with the raw amino-acid sequence, 128 residues long: MDMFSAPDRIPEQIRIFFKTMKQVVPAKAVCGSTVLDVAHKNGVDLEGACEGNLACSTCHVILEEPLYRKLGEPSDKEYDLIDQAFGATGTSRLGCQLRVDKSFENAVFTVPRATKNMAVDGFKPKPH.

In terms of domain architecture, 2Fe-2S ferredoxin-type spans 12–115; it reads EQIRIFFKTM…NAVFTVPRAT (104 aa). Cys50, Cys56, Cys59, and Cys96 together coordinate [2Fe-2S] cluster.

This sequence belongs to the adrenodoxin/putidaredoxin family. The cofactor is [2Fe-2S] cluster.

The protein localises to the mitosome. Functionally, ferredoxins are iron-sulfur proteins that transfer electrons in a wide variety of metabolic reactions. This is Adrenodoxin homolog from Encephalitozoon cuniculi (strain GB-M1) (Microsporidian parasite).